The chain runs to 260 residues: Isoprenyl transferase (260 aa).

The active site involves Asp38. Mg(2+) is bound at residue Asp38. Substrate-binding positions include 39–42 (GNGR), Trp43, Arg51, His55, and 83–85 (STE). The Proton acceptor role is filled by Asn86. Residues Trp87, Arg89, Arg206, and 212 to 214 (RLS) contribute to the substrate site. A Mg(2+)-binding site is contributed by Glu225.

The protein belongs to the UPP synthase family. Homodimer. It depends on Mg(2+) as a cofactor.

Functionally, catalyzes the condensation of isopentenyl diphosphate (IPP) with allylic pyrophosphates generating different type of terpenoids. This chain is Isoprenyl transferase, found in Heliobacterium mobile (Heliobacillus mobilis).